The following is a 121-amino-acid chain: MALNIENIIAEIKEASILELNDLVKAIEEEFGVTAAAPVAVAAAGGAEEATKDSFDVELTSAGDKKVGVIKAVREITGLGLKEAKGLVDGAPANIKEGVAAAEAEEIKAKLEEAGATITLK.

This sequence belongs to the bacterial ribosomal protein bL12 family. Homodimer. Part of the ribosomal stalk of the 50S ribosomal subunit. Forms a multimeric L10(L12)X complex, where L10 forms an elongated spine to which 2 to 4 L12 dimers bind in a sequential fashion. Binds GTP-bound translation factors.

Functionally, forms part of the ribosomal stalk which helps the ribosome interact with GTP-bound translation factors. Is thus essential for accurate translation. This chain is Large ribosomal subunit protein bL12, found in Streptococcus equi subsp. equi (strain 4047).